Reading from the N-terminus, the 262-residue chain is Integral membrane protein 2B (262 aa).

Residues 1-49 are Cytoplasmic-facing; that stretch reads MVKVSFNSALAHKEAANKEEENSQVLILPPDAKEPEDVVVPAGHKRAWC. The chain crosses the membrane as a helical; Signal-anchor for type II membrane protein span at residues 50-70; that stretch reads WCMCFGLAFMLAGVILGGAYL. Topologically, residues 71–262 are lumenal; it reads YKYFAFQQGG…FAMETLICEQ (192 aa). Positions 132–226 constitute a BRICHOS domain; that stretch reads FADSDPADIV…LCRGKETYKL (95 aa). Cystine bridges form between C159-C218 and C243-C260. N-linked (GlcNAc...) asparagine glycosylation occurs at N165.

The protein belongs to the ITM2 family. Homodimer; disulfide-linked. As to expression, expressed in areas of chondro-osteogenic transition and widely in the nervous system.

It is found in the golgi apparatus membrane. Its subcellular location is the cell membrane. It localises to the endosome membrane. Functionally, plays a role in the induction of neurite outgrowth. The polypeptide is Integral membrane protein 2B (ITM2B) (Gallus gallus (Chicken)).